The following is a 148-amino-acid chain: MFQGETAITLDDKGRMVVPAVYRDLIARMSANRLVLTYNPFEAGCLWLYVEKEWERVRDELMVKPNAHRVVRVLQQKLVGSSALLELDANGRISVPSSHRSAVAIGKKAVLLGMGDKFELWSEQAHHALIQQTLSDGDLGDGLLDLRL.

SpoVT-AbrB domains follow at residues 5–53 (ETAI…VEKE) and 82–125 (SALL…SEQA).

It belongs to the MraZ family. Forms oligomers.

The protein localises to the cytoplasm. It localises to the nucleoid. The protein is Transcriptional regulator MraZ of Xylella fastidiosa (strain 9a5c).